The following is a 664-amino-acid chain: MARKYIDILKKSKMMLFQDVGKSFEDDSPCKEEAPKTQIQHSVRDFCEQTTFHGVNMIFTTSLYWVRFLWVVVSLVCICLCMYSFSHVKDKYDRKEKIVNVELVFESAPFPAITVCNLNPFKNHLARSVPEISETLDAFHQAVVYSNDATMDELSGRGRRSLNDGPSFKYLQYEPVYSDCSCVPGRQECIAQTSAPRTLENACICNYDRHDGSAWPCYSAQTWEKSICPECNDIGFCNVPNTTGSGNIPCYCQLEMGYCVFQPESRVRRIWEFQGNKIPEKGSPLRKEYMEQLTQLGYGNMTDQVAITTQAKEKMILKMSGLHPQRRAALGYGKSELIKMCSFNGQQCNIDTEFKLHIDPSFGNCYTFNANPEKKLASSRAGPSYGLRLMMFVNSSDYLPTTEATGVRIAIHGKEECPFPDTFGYSAPTGVISSFGISLRNINRLPQPYGNCLQKDNPQSRSIYKGYKYEPEGCFRSCYQYRIIAKCGCADPRYPKPWKRSAWCDSTNTTTLNCLTTEGAKLSTKENQKHCKCIQPCQQDQYTTTYSAAKWPSGSIQTSCDNHSKDCNSYLREHAAMIEIYYEQMSYEILRESESYSWFNLMADMGGQAGLFLGASIMSVIEFLFFAVRTLGIACKPRRWRQKTELLRAEELNDAEKGVSTNNN.

Residues 1–67 lie on the Cytoplasmic side of the membrane; the sequence is MARKYIDILK…IFTTSLYWVR (67 aa). Residues 68-88 traverse the membrane as a helical segment; the sequence is FLWVVVSLVCICLCMYSFSHV. Residues 89–607 are Extracellular-facing; it reads KDKYDRKEKI…WFNLMADMGG (519 aa). Asparagine 241, asparagine 300, asparagine 394, asparagine 508, and asparagine 562 each carry an N-linked (GlcNAc...) asparagine glycan. The chain crosses the membrane as a helical span at residues 608-628; it reads QAGLFLGASIMSVIEFLFFAV. Residues 629–664 are Cytoplasmic-facing; that stretch reads RTLGIACKPRRWRQKTELLRAEELNDAEKGVSTNNN.

The protein belongs to the amiloride-sensitive sodium channel (TC 1.A.6) family.

It localises to the membrane. Probable sodium channel subunit. The protein is Degenerin del-1 (del-1) of Caenorhabditis elegans.